The following is a 264-amino-acid chain: Apolipoprotein A-I (264 aa).

The N-terminal stretch at 1 to 18 (MKAVVLAVAVLFLTGSQA) is a signal peptide. 2 tandem repeats follow at residues 67–88 (LNLL…EQLG) and 89–110 (PVTR…QEMN). A 10 X approximate tandem repeats region spans residues 67–264 (LNLLENWDTF…DEATQKLNTQ (198 aa)). At M109 the chain carries Methionine sulfoxide. The 3; half-length repeat unit spans residues 111–121 (KDLEEVKQKVQ). 3 tandem repeats follow at residues 122–143 (PYLD…PKVE), 144–165 (PLGA…KQLV), and 166–187 (PLGE…TKLA). A 7; truncated repeat occupies 188-207 (PYSDQMRDRLAERLTALRDN). The residue at position 193 (M193) is a Methionine sulfoxide. Repeat unit 8 spans residues 208 to 229 (PKLAEYHARATEHLKKLGEKTK). Residues 230 to 240 (PTLEDLRQGLM) form a 9; half-length repeat. M240 bears the Methionine sulfoxide mark. The stretch at 241–264 (PWLESLKAKALSVLDEATQKLNTQ) is repeat 10.

This sequence belongs to the apolipoprotein A1/A4/E family. In terms of assembly, homodimer. Interacts with APOA1BP and CLU. Component of a sperm activating protein complex (SPAP), consisting of APOA1, an immunoglobulin heavy chain, an immunoglobulin light chain and albumin. Interacts with NDRG1. Interacts with SCGB3A2. Interacts with NAXE and YJEFN3. In terms of processing, glycosylated. Post-translationally, palmitoylated. Phosphorylation sites are present in the extracellular medium.

It is found in the secreted. Functionally, participates in the reverse transport of cholesterol from tissues to the liver for excretion by promoting cholesterol efflux from tissues and by acting as a cofactor for the lecithin cholesterol acyltransferase (LCAT). As part of the SPAP complex, activates spermatozoa motility. The protein is Apolipoprotein A-I (Apoa1) of Nannospalax galili (Northern Israeli blind subterranean mole rat).